Consider the following 117-residue polypeptide: Calcitonin receptor-stimulating peptide 2 (117 aa).

The N-terminal stretch at 1–25 (MGFWKFPPFLVLSILVLYQAGMFHT) is a signal peptide. The propeptide occupies 26-79 (APVRLPLESSFDSATLTEEEVSLLLVAMVKDYVQMKATVLEQESEDFSITAQEK). An intrachain disulfide couples Cys-81 to Cys-86.

Belongs to the calcitonin family. In terms of tissue distribution, mainly expressed in the thyroid gland and CNS. Found in the nerve cells of the cerebrum, hippocampus, hypothalamus, pons/midbrain and thalamus. Also detected in the glia-like cells of pons/midbrain and in meninx of tactus opticus.

It is found in the secreted. The sequence is that of Calcitonin receptor-stimulating peptide 2 (CRSP2) from Sus scrofa (Pig).